The following is a 369-amino-acid chain: 2-aminoethylphosphonate--pyruvate transaminase (369 aa).

An N6-(pyridoxal phosphate)lysine modification is found at Lys-193.

It belongs to the class-V pyridoxal-phosphate-dependent aminotransferase family. PhnW subfamily. Homodimer. It depends on pyridoxal 5'-phosphate as a cofactor.

The enzyme catalyses (2-aminoethyl)phosphonate + pyruvate = phosphonoacetaldehyde + L-alanine. In terms of biological role, involved in phosphonate degradation. The polypeptide is 2-aminoethylphosphonate--pyruvate transaminase (Burkholderia pseudomallei (strain 668)).